Consider the following 417-residue polypeptide: Laccase-like protein claX (417 aa).

The protein belongs to the multicopper oxidase family.

Its function is as follows. Laccase-like protein; part of the gene cluster that mediates the biosynthesis of clavilactone A, a meroterpenoid that features a unique benzo-fused ten-membered carbocyclic ring unit with an alpha,beta-epoxy-gamma-lactone moiety, forming an intriguing 10/5/3 tricyclic nested skeleton. ClaR, ClaS and ClaT are sufficient to produce clavilactone A and the function of claX, if any, has still to be identified. The biosynthesis begins with the prenyltransferase claS that transfers geranyl pyrophosphate (GPP) to hydroquinone to produces geranylhydroquinon. The cytochrome P450 monooxygenase claR then catalyzes the diradical coupling reaction between the intramolecular hydroquinone and allyl moieties to form the benzo-fused ten-membered carbocyclic ring unit of wigantol. Finally the cytochrome P450 monooxygenase claT exquisitely and stereoselectively assembles the alpha,beta-epoxy-gamma-lactone moiety, producing clavilactone A via arnebinol A. This chain is Laccase-like protein claX, found in Ampulloclitocybe clavipes (Club foot).